The primary structure comprises 673 residues: Annexin A6 (673 aa).

At alanine 2 the chain carries N-acetylalanine. Phosphoserine is present on serine 13. Annexin repeat units follow at residues 20–91, 92–163, 175–247, 251–322, 363–434, 435–506, 521–595, and 599–670; these read FDPN…GLMR, PPAY…VLLQ, DLVQ…AVVK, STPE…KLSG, FNPD…GLMM, PPAH…SLAT, EDAQ…AIVQ, and NKPL…ALCG. Tyrosine 30 carries the post-translational modification Phosphotyrosine. N6-acetyllysine occurs at positions 63, 68, 75, and 81. Tyrosine 201 is subject to Phosphotyrosine. Residues lysine 306, lysine 370, and lysine 418 each carry the N6-acetyllysine modification. Serine 422 bears the Phosphoserine mark. Lysine 483 carries the N6-acetyllysine modification. Phosphoserine is present on serine 537. Lysine 620 carries the N6-acetyllysine modification.

This sequence belongs to the annexin family. Post-translationally, phosphorylated in response to growth factor stimulation.

It is found in the cytoplasm. The protein localises to the melanosome. Its function is as follows. May associate with CD21. May regulate the release of Ca(2+) from intracellular stores. This is Annexin A6 (ANXA6) from Homo sapiens (Human).